The primary structure comprises 393 residues: Putative zinc metalloprotease Rip3 (393 aa).

2 helical membrane passes run 10-30 and 45-65; these read IAGFVVNVHWSVLVILWLFTW and AVVYWLLGAGGAVMLLASLLA. H66 provides a ligand contact to Zn(2+). The active site involves E67. A Zn(2+)-binding site is contributed by H70. The next 4 helical transmembrane spans lie at 77-97, 108-128, 136-156, and 207-227; these read AGVSVESVTLWLFGGVTALGG, IAFAGPATSLALSATFGALAI, PAIVISVAWWLATVNLLLGLF, and FVAGGLVGGVWLAFIGWFIFA. 2 CBS domains span residues 251–308 and 315–376; these read MTAQ…RRST and ALPL…AQPE.

The protein belongs to the peptidase M50B family. The cofactor is Zn(2+).

It is found in the cell membrane. The sequence is that of Putative zinc metalloprotease Rip3 (rip3) from Mycobacterium tuberculosis (strain ATCC 35801 / TMC 107 / Erdman).